Here is a 687-residue protein sequence, read N- to C-terminus: Glycine--tRNA ligase beta subunit (687 aa).

It belongs to the class-II aminoacyl-tRNA synthetase family. Tetramer of two alpha and two beta subunits.

It is found in the cytoplasm. It carries out the reaction tRNA(Gly) + glycine + ATP = glycyl-tRNA(Gly) + AMP + diphosphate. This Lactobacillus helveticus (strain DPC 4571) protein is Glycine--tRNA ligase beta subunit.